Consider the following 241-residue polypeptide: Uridylate kinase (241 aa).

Position 14–17 (14–17) interacts with ATP; it reads KASG. Positions 22 to 27 are involved in allosteric activation by GTP; the sequence is GDQGFG. G56 provides a ligand contact to UMP. ATP contacts are provided by G57 and R61. Residues D76 and 137–144 contribute to the UMP site; that span reads TGNPFFTT. ATP-binding residues include T164, Q165, Y170, and D173.

Belongs to the UMP kinase family. Homohexamer.

The protein resides in the cytoplasm. It catalyses the reaction UMP + ATP = UDP + ADP. Its pathway is pyrimidine metabolism; CTP biosynthesis via de novo pathway; UDP from UMP (UMPK route): step 1/1. With respect to regulation, allosterically activated by GTP. Inhibited by UTP. Its function is as follows. Catalyzes the reversible phosphorylation of UMP to UDP. The protein is Uridylate kinase of Agrobacterium fabrum (strain C58 / ATCC 33970) (Agrobacterium tumefaciens (strain C58)).